A 174-amino-acid polypeptide reads, in one-letter code: Adenine phosphoribosyltransferase (174 aa).

Belongs to the purine/pyrimidine phosphoribosyltransferase family. As to quaternary structure, homodimer.

Its subcellular location is the cytoplasm. The catalysed reaction is AMP + diphosphate = 5-phospho-alpha-D-ribose 1-diphosphate + adenine. The protein operates within purine metabolism; AMP biosynthesis via salvage pathway; AMP from adenine: step 1/1. Its function is as follows. Catalyzes a salvage reaction resulting in the formation of AMP, that is energically less costly than de novo synthesis. The protein is Adenine phosphoribosyltransferase of Mycobacterium sp. (strain JLS).